A 377-amino-acid polypeptide reads, in one-letter code: Chaperone protein DnaJ (377 aa).

One can recognise a J domain in the interval 6–70 (DYYKILGIDK…EKKAIYDKYG (65 aa)). A CR-type zinc finger spans residues 143 to 225 (GRVISQKLDK…CKGAKKIKES (83 aa)). Residues cysteine 156, cysteine 159, cysteine 173, cysteine 176, cysteine 199, cysteine 202, cysteine 213, and cysteine 216 each contribute to the Zn(2+) site. CXXCXGXG motif repeat units follow at residues 156 to 163 (CESCNGTG), 173 to 180 (CSTCNGRG), 199 to 206 (CSTCNGLG), and 213 to 220 (CPSCKGAK).

The protein belongs to the DnaJ family. In terms of assembly, homodimer. It depends on Zn(2+) as a cofactor.

It is found in the cytoplasm. Participates actively in the response to hyperosmotic and heat shock by preventing the aggregation of stress-denatured proteins and by disaggregating proteins, also in an autonomous, DnaK-independent fashion. Unfolded proteins bind initially to DnaJ; upon interaction with the DnaJ-bound protein, DnaK hydrolyzes its bound ATP, resulting in the formation of a stable complex. GrpE releases ADP from DnaK; ATP binding to DnaK triggers the release of the substrate protein, thus completing the reaction cycle. Several rounds of ATP-dependent interactions between DnaJ, DnaK and GrpE are required for fully efficient folding. Also involved, together with DnaK and GrpE, in the DNA replication of plasmids through activation of initiation proteins. This chain is Chaperone protein DnaJ, found in Mycoplasmopsis pulmonis (strain UAB CTIP) (Mycoplasma pulmonis).